Reading from the N-terminus, the 418-residue chain is Tyrosine--tRNA ligase (418 aa).

The 'HIGH' region motif lies at 42–51 (PTSPDLHLGH). A 'KMSKS' region motif is present at residues 226–230 (KMSKS). Lys229 is an ATP binding site. Residues 339 to 400 (VRLVALLTKS…GKRNFIKVRL (62 aa)) form the S4 RNA-binding domain.

It belongs to the class-I aminoacyl-tRNA synthetase family. TyrS type 2 subfamily. Homodimer.

It localises to the cytoplasm. It carries out the reaction tRNA(Tyr) + L-tyrosine + ATP = L-tyrosyl-tRNA(Tyr) + AMP + diphosphate + H(+). Catalyzes the attachment of tyrosine to tRNA(Tyr) in a two-step reaction: tyrosine is first activated by ATP to form Tyr-AMP and then transferred to the acceptor end of tRNA(Tyr). This Xylella fastidiosa (strain Temecula1 / ATCC 700964) protein is Tyrosine--tRNA ligase.